The sequence spans 129 residues: Lysozyme C (129 aa).

A C-type lysozyme domain is found at 1-129 (KIYKRCELAA…VSTWIKDCKL (129 aa)). 4 disulfides stabilise this stretch: Cys6–Cys127, Cys30–Cys115, Cys64–Cys80, and Cys76–Cys94. Active-site residues include Glu35 and Asp52.

This sequence belongs to the glycosyl hydrolase 22 family. As to quaternary structure, monomer.

The protein localises to the secreted. The catalysed reaction is Hydrolysis of (1-&gt;4)-beta-linkages between N-acetylmuramic acid and N-acetyl-D-glucosamine residues in a peptidoglycan and between N-acetyl-D-glucosamine residues in chitodextrins.. Its function is as follows. Lysozymes have primarily a bacteriolytic function; those in tissues and body fluids are associated with the monocyte-macrophage system and enhance the activity of immunoagents. This chain is Lysozyme C (LYZ), found in Ortalis vetula (Plain chachalaca).